Here is a 122-residue protein sequence, read N- to C-terminus: Small ribosomal subunit protein uS13 (122 aa).

Positions 92–122 (HRMGLPVRGQRTKTNARTRKGPSKPVSGKKK) are disordered. Residues 101 to 122 (QRTKTNARTRKGPSKPVSGKKK) show a composition bias toward basic residues.

Belongs to the universal ribosomal protein uS13 family. In terms of assembly, part of the 30S ribosomal subunit. Forms a loose heterodimer with protein S19. Forms two bridges to the 50S subunit in the 70S ribosome.

Functionally, located at the top of the head of the 30S subunit, it contacts several helices of the 16S rRNA. In the 70S ribosome it contacts the 23S rRNA (bridge B1a) and protein L5 of the 50S subunit (bridge B1b), connecting the 2 subunits; these bridges are implicated in subunit movement. Contacts the tRNAs in the A and P-sites. The polypeptide is Small ribosomal subunit protein uS13 (Ruminiclostridium cellulolyticum (strain ATCC 35319 / DSM 5812 / JCM 6584 / H10) (Clostridium cellulolyticum)).